Consider the following 153-residue polypeptide: MKAVCVMTGTAGVKGVVKFTQETDNGPVHVHAEFSGLKAGKHGFHVHEFGDTTNGCTSAGAHFNPTKQEHGAPEDSIRHVGDLGNVVAGADGNAVYNATDKLISLNGSHSIIGRTMVIHENEDDLGRGGHELSKVTGNAGGRLACGVIGLAAE.

His-45, His-47, and His-62 together coordinate Cu cation. An intrachain disulfide couples Cys-56 to Cys-145. Zn(2+)-binding residues include His-62, His-70, His-79, and Asp-82. Position 119 (His-119) interacts with Cu cation.

Belongs to the Cu-Zn superoxide dismutase family. As to quaternary structure, homodimer. The cofactor is Cu cation. Zn(2+) serves as cofactor.

It is found in the cytoplasm. It catalyses the reaction 2 superoxide + 2 H(+) = H2O2 + O2. Its function is as follows. Destroys radicals which are normally produced within the cells and which are toxic to biological systems. This chain is Superoxide dismutase [Cu-Zn] (SOD), found in Schistosoma mansoni (Blood fluke).